Consider the following 34-residue polypeptide: uncharacterized protein (34 aa).

The segment covering 1–12 (MFSHFEVSENRP) has biased composition (basic and acidic residues). Positions 1–21 (MFSHFEVSENRPRKQPRRKRI) are disordered.

This is an uncharacterized protein from Saccharomyces cerevisiae (strain ATCC 204508 / S288c) (Baker's yeast).